The primary structure comprises 505 residues: Transcription factor APG (505 aa).

Disordered regions lie at residues 1-40 (MLRGNDTGSDLAELLWDNGAPAPLRPPPPPPFQPFTCSAA), 61-99 (GAANHHHHDDDDDDDDDVPWLHYHPVVDDDDDADADTAP), 119-156 (PAAAASRVDPDPCSSSHGAVVPSTSAAAAKQARTSGGG), 169-242 (PLQQ…APTT), 256-312 (AQRL…SQDE), 324-344 (RRSAARSSKRSRTAEVHNLSE), and 469-505 (PPPPPPPFPHAAATAVEQTPSPPGAADAGNAPAVKQA). Pro residues predominate over residues 23–33 (PLRPPPPPPFQ). Over residues 131–144 (CSSSHGAVVPSTSA) the composition is skewed to polar residues. Residues 174 to 199 (PSGGETASASASAAATSTVPVESTVV) are compositionally biased toward low complexity. Positions 200–212 (QAATNRLRSTPLF) are enriched in polar residues. A compositionally biased stretch (pro residues) spans 222 to 239 (PPKPSPRAAAPPPPPPLA). The segment covering 288–299 (GDRRQLNWRDSH) has biased composition (basic and acidic residues). Over residues 300 to 310 (NNQSAEWSASQ) the composition is skewed to polar residues. The span at 324–334 (RRSAARSSKRS) shows a compositional bias: basic residues. The span at 335–344 (RTAEVHNLSE) shows a compositional bias: basic and acidic residues. The 50-residue stretch at 335–384 (RTAEVHNLSERRRRDRINEKMRALQELIPNCNKIDKASMLEEAIEYLKTL) folds into the bHLH domain. Over residues 492–505 (GAADAGNAPAVKQA) the composition is skewed to low complexity.

This sequence belongs to the bHLH protein family. Homodimer and heterodimer with ILI5 or ILI6.

It localises to the nucleus. Atypical bHLH transcription factor that acts as a negative regulator of grain size. Binds the transcription factor ILI6 and forms a heterodimer of antagonistic bHLH transcription factors that regulates grain length and weight by controlling cell elongation in lemma and palea. May be involved in the control of lamina inclination through brassinosteroid signaling pathway. The protein is Transcription factor APG (APG) of Oryza sativa subsp. japonica (Rice).